The sequence spans 160 residues: MQRVSGLLSWTLSRVLWLSGLSEPGAARQPRIMEEKALEVYDLIRTIRDPEKPNTLEELEVVSESCVEVQEINEEEYLVIIRFTPTVPHCSLATLIGLCLRVKLQRCLPFKHKLEIYISEGTHSTEEDINKQINDKERVAAAMENPNLREIVEQCVLEPD.

Residues His89, His123, Glu150, and Glu153 each coordinate Zn(2+).

This sequence belongs to the MIP18 family. As to quaternary structure, monomer and homodimer. Component of the CIA complex. Interacts with CIAO1. Interacts with IREB2. Interacts with APAF1. In terms of tissue distribution, substantially enriched in macrophages.

The protein localises to the cytoplasm. Functionally, component of the cytosolic iron-sulfur protein assembly (CIA) complex, a multiprotein complex that mediates the incorporation of iron-sulfur cluster into extramitochondrial Fe/S proteins. As a CIA complex component and in collaboration with CIAO1 specifically matures ACO1 and stabilizes IREB2, connecting cytosolic iron-sulfur protein maturation with cellular iron regulation. May play a role in chromosome segregation through establishment of sister chromatid cohesion. May induce apoptosis in collaboration with APAF1. This chain is Cytosolic iron-sulfur assembly component 2A, found in Homo sapiens (Human).